A 708-amino-acid chain; its full sequence is MSERGIKWACEYCTYENWPSAIKCTMCRAQRPSGTIITEDPFKSGSSDVGRDWDPSSTEGGSSPLICPDSSARPRVKSSYSMENANKWSCHMCTYLNWPRAIRCTQCLSQRRTRSPTESPQSSGSGSRPVAFSVDPCEEYNDRNKLNTRTQHWTCSVCTYENWAKAKRCVVCDHPRPNNIEAIELAETEEASSIINEQDRARWRGSCSSGNSQRRSPPATKRDSEVKMDFQRIELAGAVGSKEELEVDFKKLKQIKNRMKKTDWLFLNACVGVVEGDLAAIEAYKSSGGDIARQLTADEVRLLNRPSAFDVGYTLVHLAIRFQRQDMLAILLTEVSQQAAKCIPAMVCPELTEQIRREIAASLHQRKGDFACYFLTDLVTFTLPADIEDLPPTVQEKLFDEVLDRDVQKELEEESPIINWSLELATRLDSRLYALWNRTAGDCLLDSVLQATWGIYDKDSVLRKALHDSLHDCSHWFYTRWKDWESWYSQSFGLHFSLREEQWQEDWAFILSLASQPGASLEQTHIFVLAHILRRPIIVYGVKYYKSFRGETLGYTRFQGVYLPLLWEQSFCWKSPIALGYTRGHFSALVAMENDGYGNRGAGANLNTDDDVTITFLPLVDSERKLLHVHFLSAQELGNEEQQEKLLREWLDCCVTEGGVLVAMQKSSRRRNHPLVTQMVEKWLDRYRQIRPCTSLSDGEEDEDDEDE.

The RanBP2-type 1 zinc-finger motif lies at 3–33 (ERGIKWACEYCTYENWPSAIKCTMCRAQRPS). Zn(2+) is bound by residues Cys10, Cys13, Cys24, and Cys27. Residues 38–73 (TEDPFKSGSSDVGRDWDPSSTEGGSSPLICPDSSAR) are disordered. 2 consecutive RanBP2-type zinc fingers follow at residues 84–113 (NANK…QRRT) and 149–178 (RTQH…PRPN). Cys90, Cys93, Cys104, Cys107, Cys155, Cys158, Cys169, and Cys172 together coordinate Zn(2+). The disordered stretch occupies residues 200-225 (RARWRGSCSSGNSQRRSPPATKRDSE). The segment covering 206–215 (SCSSGNSQRR) has biased composition (polar residues). ANK repeat units follow at residues 260–290 (KKTD…SGGD) and 313–340 (YTLV…QQAA). The TRAF-binding stretch occupies residues 392 to 641 (PTVQEKLFDE…LSAQELGNEE (250 aa)). The region spanning 432–592 (LYALWNRTAG…RGHFSALVAM (161 aa)) is the OTU domain. Cys443 serves as the catalytic Nucleophile. His585 serves as the catalytic Proton acceptor.

The protein belongs to the peptidase C64 family. In terms of assembly, interacts with TRAF6. Interacts with APC. As to expression, widely expressed.

It is found in the cytoplasm. The protein resides in the nucleus. It carries out the reaction Thiol-dependent hydrolysis of ester, thioester, amide, peptide and isopeptide bonds formed by the C-terminal Gly of ubiquitin (a 76-residue protein attached to proteins as an intracellular targeting signal).. Functionally, ubiquitin thioesterase, which specifically hydrolyzes 'Lys-29'-linked and 'Lys-33'-linked diubiquitin. Also cleaves 'Lys-63'-linked chains, but with 40-fold less efficiency compared to 'Lys-29'-linked ones. Positive regulator of the Wnt signaling pathway that deubiquitinates APC protein, a negative regulator of Wnt-mediated transcription. Acts as a regulator of autophagy by mediating deubiquitination of PIK3C3/VPS34, thereby promoting autophagosome maturation. Plays a role in the regulation of cell morphology and cytoskeletal organization. Required in the stress fiber dynamics and cell migration. This Homo sapiens (Human) protein is Ubiquitin thioesterase ZRANB1.